We begin with the raw amino-acid sequence, 427 residues long: Glutamate-1-semialdehyde 2,1-aminomutase (427 aa).

Lysine 265 is modified (N6-(pyridoxal phosphate)lysine).

This sequence belongs to the class-III pyridoxal-phosphate-dependent aminotransferase family. HemL subfamily. As to quaternary structure, homodimer. It depends on pyridoxal 5'-phosphate as a cofactor.

The protein localises to the cytoplasm. The catalysed reaction is (S)-4-amino-5-oxopentanoate = 5-aminolevulinate. The protein operates within porphyrin-containing compound metabolism; protoporphyrin-IX biosynthesis; 5-aminolevulinate from L-glutamyl-tRNA(Glu): step 2/2. The polypeptide is Glutamate-1-semialdehyde 2,1-aminomutase (Pseudomonas putida (strain ATCC 700007 / DSM 6899 / JCM 31910 / BCRC 17059 / LMG 24140 / F1)).